The primary structure comprises 209 residues: LexA repressor (209 aa).

Residues 30-50 constitute a DNA-binding region (H-T-H motif); the sequence is RVEIAREIGFKSPNAAEEHLK. Residues S126 and K163 each act as for autocatalytic cleavage activity in the active site.

Belongs to the peptidase S24 family. In terms of assembly, homodimer.

It catalyses the reaction Hydrolysis of Ala-|-Gly bond in repressor LexA.. Functionally, represses a number of genes involved in the response to DNA damage (SOS response), including recA and lexA. In the presence of single-stranded DNA, RecA interacts with LexA causing an autocatalytic cleavage which disrupts the DNA-binding part of LexA, leading to derepression of the SOS regulon and eventually DNA repair. This Glaesserella parasuis serovar 5 (strain SH0165) (Haemophilus parasuis) protein is LexA repressor.